The following is a 218-amino-acid chain: ATP-dependent Clp protease proteolytic subunit 2 (218 aa).

The protein belongs to the peptidase S14 family. In terms of assembly, fourteen ClpP subunits assemble into 2 heptameric rings which stack back to back to give a disk-like structure with a central cavity, resembling the structure of eukaryotic proteasomes.

Its subcellular location is the cytoplasm. The catalysed reaction is Hydrolysis of proteins to small peptides in the presence of ATP and magnesium. alpha-casein is the usual test substrate. In the absence of ATP, only oligopeptides shorter than five residues are hydrolyzed (such as succinyl-Leu-Tyr-|-NHMec, and Leu-Tyr-Leu-|-Tyr-Trp, in which cleavage of the -Tyr-|-Leu- and -Tyr-|-Trp bonds also occurs).. Functionally, cleaves peptides in various proteins in a process that requires ATP hydrolysis. Has a chymotrypsin-like activity. Plays a major role in the degradation of misfolded proteins. This is ATP-dependent Clp protease proteolytic subunit 2 from Gloeobacter violaceus (strain ATCC 29082 / PCC 7421).